Here is a 249-residue protein sequence, read N- to C-terminus: MSSIGTGYDLSVTTFSPDGRVFQVEYATKAVDNSGTVVGIKCKDGIVLGVEKLVTSKMMLEGSNRRIHSVHWHSGLAVAGLAADGRQIVSRAKSEAASYEKVYGEPISVKELADRVASYVHLCTLYWWLRPFGCGVILGGYDRDGPQLYMIEPSGVSYKYFGAALGKGRQAAKTEIEKLKLSELTCREGIVEVAKIIYGVHDEAKDKAFELELSWICDESNRQHQKVPADLLEQAKVAAQAALEEMDAD.

Belongs to the peptidase T1A family. The 26S proteasome consists of a 20S proteasome core and two 19S regulatory subunits. The 20S proteasome core is composed of 28 subunits that are arranged in four stacked rings, resulting in a barrel-shaped structure. The two end rings are each formed by seven alpha subunits, and the two central rings are each formed by seven beta subunits. The catalytic chamber with the active sites is on the inside of the barrel.

The protein resides in the cytoplasm. It localises to the nucleus. Its function is as follows. The proteasome is a multicatalytic proteinase complex which is characterized by its ability to cleave peptides with Arg, Phe, Tyr, Leu, and Glu adjacent to the leaving group at neutral or slightly basic pH. The proteasome has an ATP-dependent proteolytic activity. The sequence is that of Proteasome subunit alpha type-3 (PAG1) from Oryza sativa subsp. japonica (Rice).